Reading from the N-terminus, the 627-residue chain is Asparagine synthetase domain-containing protein 1 (627 aa).

Cys-2 functions as the For GATase activity in the catalytic mechanism. Residues 2 to 184 (CGICCSVSFS…ASGIFQIDLN (183 aa)) form the Glutamine amidotransferase type-2 domain. Residues 308–597 (ASKEVLKTCS…GLPASALLPK (290 aa)) enclose the Asparagine synthetase domain. Residues 373-404 (QQNHHEIPSEESSQSPAADEGPGEAEVPDRVT) form a disordered region.

This chain is Asparagine synthetase domain-containing protein 1 (Asnsd1), found in Mus musculus (Mouse).